A 138-amino-acid polypeptide reads, in one-letter code: Acidic phospholipase A2 5 (138 aa).

An N-terminal signal peptide occupies residues 1-16; that stretch reads MRTLWIVAVWLIGVEG. Disulfide bonds link Cys42-Cys131, Cys44-Cys60, Cys59-Cys111, Cys65-Cys138, Cys66-Cys104, Cys73-Cys97, and Cys91-Cys102. Residues Tyr43, Gly45, and Gly47 each coordinate Ca(2+). His63 is a catalytic residue. Ca(2+) is bound at residue Asp64. Asp105 is an active-site residue.

The protein belongs to the phospholipase A2 family. Group II subfamily. D49 sub-subfamily. Requires Ca(2+) as cofactor. In terms of tissue distribution, expressed by the venom gland.

It localises to the secreted. It catalyses the reaction a 1,2-diacyl-sn-glycero-3-phosphocholine + H2O = a 1-acyl-sn-glycero-3-phosphocholine + a fatty acid + H(+). Functionally, PLA2 catalyzes the calcium-dependent hydrolysis of the 2-acyl groups in 3-sn-phosphoglycerides. In Echis ocellatus (Ocellated saw-scaled viper), this protein is Acidic phospholipase A2 5.